Consider the following 154-residue polypeptide: Transcription antitermination protein NusB (154 aa).

It belongs to the NusB family.

Its function is as follows. Involved in transcription antitermination. Required for transcription of ribosomal RNA (rRNA) genes. Binds specifically to the boxA antiterminator sequence of the ribosomal RNA (rrn) operons. The protein is Transcription antitermination protein NusB of Bordetella parapertussis (strain 12822 / ATCC BAA-587 / NCTC 13253).